A 613-amino-acid polypeptide reads, in one-letter code: Proline--tRNA ligase (613 aa).

This sequence belongs to the class-II aminoacyl-tRNA synthetase family. ProS type 1 subfamily. Homodimer.

The protein localises to the cytoplasm. It carries out the reaction tRNA(Pro) + L-proline + ATP = L-prolyl-tRNA(Pro) + AMP + diphosphate. Its function is as follows. Catalyzes the attachment of proline to tRNA(Pro) in a two-step reaction: proline is first activated by ATP to form Pro-AMP and then transferred to the acceptor end of tRNA(Pro). As ProRS can inadvertently accommodate and process non-cognate amino acids such as alanine and cysteine, to avoid such errors it has two additional distinct editing activities against alanine. One activity is designated as 'pretransfer' editing and involves the tRNA(Pro)-independent hydrolysis of activated Ala-AMP. The other activity is designated 'posttransfer' editing and involves deacylation of mischarged Ala-tRNA(Pro). The misacylated Cys-tRNA(Pro) is not edited by ProRS. The chain is Proline--tRNA ligase from Tropheryma whipplei (strain Twist) (Whipple's bacillus).